A 325-amino-acid polypeptide reads, in one-letter code: ATP phosphoribosyltransferase (325 aa).

This sequence belongs to the ATP phosphoribosyltransferase family. Long subfamily. It depends on Mg(2+) as a cofactor.

It is found in the cytoplasm. It catalyses the reaction 1-(5-phospho-beta-D-ribosyl)-ATP + diphosphate = 5-phospho-alpha-D-ribose 1-diphosphate + ATP. The protein operates within amino-acid biosynthesis; L-histidine biosynthesis; L-histidine from 5-phospho-alpha-D-ribose 1-diphosphate: step 1/9. Feedback inhibited by histidine. In terms of biological role, catalyzes the condensation of ATP and 5-phosphoribose 1-diphosphate to form N'-(5'-phosphoribosyl)-ATP (PR-ATP). Has a crucial role in the pathway because the rate of histidine biosynthesis seems to be controlled primarily by regulation of HisG enzymatic activity. This chain is ATP phosphoribosyltransferase, found in Rhodopseudomonas palustris (strain HaA2).